Here is a 109-residue protein sequence, read N- to C-terminus: Nucleoid-associated protein VV2410 (109 aa).

The tract at residues 1–22 (MFGKGGMGNLMKQAQQMQERMQ) is disordered.

It belongs to the YbaB/EbfC family. Homodimer.

The protein localises to the cytoplasm. It localises to the nucleoid. Functionally, binds to DNA and alters its conformation. May be involved in regulation of gene expression, nucleoid organization and DNA protection. The sequence is that of Nucleoid-associated protein VV2410 from Vibrio vulnificus (strain YJ016).